Reading from the N-terminus, the 141-residue chain is MERTLAILKPDCVRKNLIGAAIEKIQSAGFKVVAMKMTRLTKETAGEFYAVHKARPFYGELVEFMSSGACVPLMLEKENAVADFRTLIGATDPAEAAEGTIRKLYADSKGENIVHGSDSVENAKIECGFFFSTQEAVANMA.

ATP contacts are provided by Lys-9, Phe-57, Arg-85, Thr-91, Arg-102, and Asn-112. His-115 (pros-phosphohistidine intermediate) is an active-site residue.

Belongs to the NDK family. Homotetramer. The cofactor is Mg(2+).

The protein localises to the cytoplasm. It catalyses the reaction a 2'-deoxyribonucleoside 5'-diphosphate + ATP = a 2'-deoxyribonucleoside 5'-triphosphate + ADP. It carries out the reaction a ribonucleoside 5'-diphosphate + ATP = a ribonucleoside 5'-triphosphate + ADP. Functionally, major role in the synthesis of nucleoside triphosphates other than ATP. The ATP gamma phosphate is transferred to the NDP beta phosphate via a ping-pong mechanism, using a phosphorylated active-site intermediate. The chain is Nucleoside diphosphate kinase from Chloroherpeton thalassium (strain ATCC 35110 / GB-78).